Consider the following 675-residue polypeptide: MLYFIFCQNLSSSSSMSNSILFLSLFLFLPFVVDSLYFNFTSFRQGDPGDIFYHGDATPDEDGTVNFNNAEQTSQVGWITYSKKVPIWSHKTGKASDFSTSFSFKIDARNLSADGHGICFFLAPMGAQLPAYSVGGFLNLFTRKNNYSSSFPLVHVEFDTFNNPGWDPNDVGSHVGINNNSLVSSNYTSWNASSHSQDICHAKISYDSVTKNLSVTWAYELTATSDPKESSSLSYIIDLAKVLPSDVMFGFIAAAGTNTEEHRLLSWELSSSLDSDKADSRIGLVIGISASGFVFLTFMVITTVVVWSRKQRKKKERDIENMISINKDLEREAGPRKFSYKDLVSATNRFSSHRKLGEGGFGAVYEGNLKEINTMVAVKKLSGDSRQGKNEFLNEVKIISKLRHRNLVQLIGWCNEKNEFLLIYELVPNGSLNSHLFGKRPNLLSWDIRYKIGLGLASALLYLHEEWDQCVLHRDIKASNIMLDSEFNVKLGDFGLARLMNHELGSHTTGLAGTFGYMAPEYVMKGSASKESDIYSFGIVLLEIVTGRKSLERTQEDNSDTESDDEKSLVEKVWELYGKQELITSCVDDKLGEDFDKKEAECLLVLGLWCAHPDKNSRPSIKQGIQVMNFESPLPDLPLKRPVAMYYISTTTSSSSPSVNSNGVSVTFSGIEYGR.

The signal sequence occupies residues M1–S35. N9, N39, N110, N146, N179, N186, N191, and N212 each carry an N-linked (GlcNAc...) asparagine glycan. Positions L36–L269 are legume-lectin like. At L36 to R281 the chain is on the extracellular side. A helical transmembrane segment spans residues I282–T302. The Cytoplasmic portion of the chain corresponds to T303–R675. A Protein kinase domain is found at F350–E631. Residues L356–V364 and K379 contribute to the ATP site. D475 serves as the catalytic Proton acceptor.

It in the C-terminal section; belongs to the protein kinase superfamily. Ser/Thr protein kinase family. This sequence in the N-terminal section; belongs to the leguminous lectin family. Interacts with ABCG40.

The protein resides in the cell membrane. The catalysed reaction is L-seryl-[protein] + ATP = O-phospho-L-seryl-[protein] + ADP + H(+). It catalyses the reaction L-threonyl-[protein] + ATP = O-phospho-L-threonyl-[protein] + ADP + H(+). In terms of biological role, promotes hydrogen peroxide H(2)O(2) production and cell death. Functionally, involved in resistance response to the pathogenic oomycetes Phytophthora infestans and Phytophthora capsici. The protein is L-type lectin-domain containing receptor kinase IX.2 of Arabidopsis thaliana (Mouse-ear cress).